An 838-amino-acid polypeptide reads, in one-letter code: Envelope glycoprotein H (838 aa).

A signal peptide spans 1 to 18; that stretch reads MGNGLWFVGVIILGVAWG. Residues 19-803 lie on the Virion surface side of the membrane; the sequence is QVHDWTEQTD…DTQPVAAIAP (785 aa). N-linked (GlcNAc...) asparagine; by host glycosylation is found at Asn-73 and Asn-120. The disordered stretch occupies residues 174–204; that stretch reads FPRGDNVATASHPSGPRDTPPPRPPVGARRH. N-linked (GlcNAc...) asparagine; by host glycosylation is present at Asn-216. The interval 259–323 is interaction with gL; that stretch reads DAALVRARYG…PGGPRYRVFV (65 aa). Residues Asn-332, Asn-437, Asn-670, and Asn-784 are each glycosylated (N-linked (GlcNAc...) asparagine; by host). The helical transmembrane segment at 804–824 threads the bilayer; it reads GFLAASALGVVMITAALAGIL. The Intravirion segment spans residues 825 to 838; it reads KVLRTSVPFFWRRE.

It belongs to the herpesviridae glycoprotein H family. As to quaternary structure, interacts with glycoprotein L (gL); this interaction is necessary for the correct processing and cell surface expression of gH. The heterodimer gH/gL seems to interact with gB trimers during fusion. Associates with the gB-gH/gL-gD complex. Interacts with VP16. In terms of processing, N-glycosylated, O-glycosylated, and sialylated.

It is found in the virion membrane. It localises to the host cell membrane. Its subcellular location is the host endosome membrane. Functionally, the heterodimer glycoprotein H-glycoprotein L is required for the fusion of viral and plasma membranes leading to virus entry into the host cell. Following initial binding to host receptor, membrane fusion is mediated by the fusion machinery composed of gB and the heterodimer gH/gL. May also be involved in the fusion between the virion envelope and the outer nuclear membrane during virion morphogenesis. The polypeptide is Envelope glycoprotein H (Human herpesvirus 1 (strain 17) (HHV-1)).